Reading from the N-terminus, the 176-residue chain is DNA repair RAD52-like protein 1, mitochondrial (176 aa).

A mitochondrion-targeting transit peptide spans 1 to 37 (MAGLGLRLKAAKWTLRSGSGAVSREWSSEMGKGVRRF).

It belongs to the RAD52 family. In terms of assembly, interacts with WHY2. Expressed in root vascular tissue, tips of primary and secondary roots, young leaves, hydathodes, stomatal guard cells, cauline leaves, flower buds, stipules, carpels, pistils and anther filaments.

Its subcellular location is the mitochondrion. It localises to the nucleus. In terms of biological role, plant-specific single-stranded DNA-binding protein required for efficient heterologous recombination-dependent DNA repair in nuclear and mitochondrial compartments. Forms large nucleo-protein complexes with WHY2 in mitochondria. Binds ssDNA with high affinity, but with little sequence specificity. Involved in double-stranded DNA break repair. Involved in the hydrolytic splicing pathway in mitochondrion. Facilitates the excision of two cis-spliced group II introns, NAD1 intron 2 and NAD2 intron 1. The protein is DNA repair RAD52-like protein 1, mitochondrial of Arabidopsis thaliana (Mouse-ear cress).